Consider the following 560-residue polypeptide: Nucleoprotein (560 aa).

The tract at residues 54 to 236 is binding site for the cap structure m7GTP; that stretch reads LRKSKRGDTD…ITKDESALNI (183 aa). The Mn(2+) site is built by Asp-380 and Glu-382. Zn(2+)-binding residues include Glu-390, Cys-497, His-500, and Cys-521. Asp-525 provides a ligand contact to Mn(2+).

It belongs to the arenaviridae nucleocapsid protein family. Homomultimerizes to form the nucleocapsid. Binds to viral genomic RNA. Interacts with glycoprotein G2. Interacts with protein Z; this interaction probably directs the encapsidated genome to budding sites. Interacts with protein L; this interaction does not interfere with Z-L interaction. Interacts with host IKBKE (via Protein kinase domain); the interaction inhibits IKBKE kinase activity.

It is found in the virion. It localises to the host cytoplasm. Encapsidates the genome, protecting it from nucleases. The encapsidated genomic RNA is termed the nucleocapsid (NC). Serves as template for viral transcription and replication. The increased presence of protein N in host cell does not seem to trigger the switch from transcription to replication as observed in other negative strain RNA viruses. Through the interaction with host IKBKE, strongly inhibits the phosphorylation and nuclear translocation of host IRF3, a protein involved in interferon activation pathway, leading to the inhibition of interferon-beta and IRF3-dependent promoters activation. Also encodes a functional 3'-5' exoribonuclease that degrades preferentially dsRNA substrates and thereby participates in the suppression of interferon induction. The protein is Nucleoprotein of Homo sapiens (Human).